Reading from the N-terminus, the 428-residue chain is D-amino acid dehydrogenase (428 aa).

Position 3–17 (3–17) interacts with FAD; it reads VVVLGSGVVGVASAY.

This sequence belongs to the DadA oxidoreductase family. The cofactor is FAD.

The enzyme catalyses a D-alpha-amino acid + A + H2O = a 2-oxocarboxylate + AH2 + NH4(+). It participates in amino-acid degradation; D-alanine degradation; NH(3) and pyruvate from D-alanine: step 1/1. Oxidative deamination of D-amino acids. This chain is D-amino acid dehydrogenase, found in Burkholderia ambifaria (strain MC40-6).